The following is a 201-amino-acid chain: Large ribosomal subunit protein uL4 (201 aa).

The tract at residues 45 to 71 (AQKTRAEVTGSGKKPWRQKGTGRARAG) is disordered.

Belongs to the universal ribosomal protein uL4 family. In terms of assembly, part of the 50S ribosomal subunit.

One of the primary rRNA binding proteins, this protein initially binds near the 5'-end of the 23S rRNA. It is important during the early stages of 50S assembly. It makes multiple contacts with different domains of the 23S rRNA in the assembled 50S subunit and ribosome. Its function is as follows. Forms part of the polypeptide exit tunnel. This is Large ribosomal subunit protein uL4 from Shewanella loihica (strain ATCC BAA-1088 / PV-4).